The sequence spans 1481 residues: Cystic fibrosis transmembrane conductance regulator (1481 aa).

Over 1-77 (MQRSPLEKAS…KLINALRRCF (77 aa)) the chain is Cytoplasmic. Residues 78 to 98 (FWRFTFYGILLYLGEVTKAVQ) form a helical membrane-spanning segment. The 285-residue stretch at 81 to 365 (FTFYGILLYL…WAVQTWYDSL (285 aa)) folds into the ABC transmembrane type-1 1 domain. Residues 99 to 122 (PLLLGRIIASYDPDNKTERSIAIY) are Extracellular-facing. Residues 123 to 146 (LGIGLCLLFIVRTLLLHPAIFGLH) traverse the membrane as a helical segment. Over 147 to 195 (HIGMQMRIAMFSLIYKKTLKLSSRVLDKISIGQLVSLLSNNLNKFDEGL) the chain is Cytoplasmic. The chain crosses the membrane as a helical span at residues 196-216 (ALAHFVWIAPLQVALLMGLIW). Over 217–222 (ELLQAS) the chain is Extracellular. Residues 223-243 (AFCGLGFLIVLALFQAGLGRM) traverse the membrane as a helical segment. Over 244–298 (MMKYRDQRAGKINERLVITSEMIENIQSVKAYCWEEAMEKMIENLRQTELKLTRK) the chain is Cytoplasmic. Residues 299-319 (AAYVRYFNSSAFFFSGFFVVF) traverse the membrane as a helical segment. Residues 320-339 (LSVLPYALIKGIILRKIFTT) are Extracellular-facing. The helical transmembrane segment at 340–358 (ISFCIVLRMAVTRQFPWAV) threads the bilayer. Topologically, residues 359 to 858 (QTWYDSLGAI…YLRYITLHKS (500 aa)) are cytoplasmic. Residues Trp401, Ser434, 458–465 (GSTGAGKT), and Gln493 contribute to the ATP site. The 224-residue stretch at 423 to 646 (NDDNNLFFSN…RPDFSSKLMG (224 aa)) folds into the ABC transporter 1 domain. Cys524 is lipidated: S-palmitoyl cysteine. Phosphoserine occurs at positions 549 and 660. Residues 654 to 831 (SSERRNSILT…EEINEEDLKE (178 aa)) form a disordered R region region. Position 670 is a phosphoserine; by PKA (Ser670). Ser686 is modified (phosphoserine). A Glycyl lysine isopeptide (Lys-Gly) (interchain with G-Cter in ubiquitin) cross-link involves residue Lys688. Phosphoserine occurs at positions 700 and 712. Thr717 carries the post-translational modification Phosphothreonine. Phosphoserine is present on residues Ser737, Ser753, Ser768, Ser790, Ser795, and Ser813. Residues 859-879 (LIFVLIWCLVIFLAEVAASLV) form a helical membrane-spanning segment. Positions 859–1155 (LIFVLIWCLV…AVNSSIDVDS (297 aa)) constitute an ABC transmembrane type-1 2 domain. The Extracellular portion of the chain corresponds to 880 to 918 (VLWLLRNTPFQDKGNSTYSRNNSYAVIITNTSSYYVFYI). N-linked (GlcNAc...) asparagine glycosylation is found at Asn894, Asn900, and Asn909. Residues 919 to 939 (YVGVADTLLALGFFRGLPLVH) form a discontinuously helical membrane-spanning segment. Residues 940–990 (TLITVSKILHHKMLHSVLQAPMSTLNTLKAGGILNRFSKDIAILDDLLPLT) lie on the Cytoplasmic side of the membrane. The helical transmembrane segment at 991–1011 (IFDFIQLLLIVIGAIAVVSVL) threads the bilayer. Over 1012–1013 (QP) the chain is Extracellular. A helical membrane pass occupies residues 1014–1034 (YIFLATVPVIAAFVLLRAYFL). At 1035–1095 (QTSQQLKQLE…TANWFLYLST (61 aa)) the chain is on the cytoplasmic side. The chain crosses the membrane as a helical span at residues 1096 to 1116 (LRWFQMRIEMIFVIFFIAVTF). Over 1117–1130 (ISILTTGEGEGTVG) the chain is Extracellular. A helical membrane pass occupies residues 1131 to 1151 (IILTLAMNIMSTLQWAVNSSI). The Cytoplasmic segment spans residues 1152 to 1481 (DVDSLMRSVS…TEEEVQETRL (330 aa)). The region spanning 1211-1444 (MTIKDLTAKY…KSLFRQAISH (234 aa)) is the ABC transporter 2 domain. Residues Tyr1220 and 1245-1252 (GRTGSGKS) each bind ATP. Positions 1387–1481 (RALKQAFADC…TEEEVQETRL (95 aa)) are interaction with GORASP2. Cys1396 carries S-palmitoyl cysteine lipidation. A phosphoserine mark is found at Ser1445 and Ser1457. Residues 1453-1481 (HRNSSKYKSRPQIASLKEETEEEVQETRL) form a disordered region. Residues 1471–1481 (ETEEEVQETRL) are compositionally biased toward acidic residues. The PDZ-binding signature appears at 1479–1481 (TRL).

The protein belongs to the ABC transporter superfamily. ABCC family. CFTR transporter (TC 3.A.1.202) subfamily. Monomer; does not require oligomerization for channel activity. May form oligomers in the membrane. Interacts with SLC26A3, SLC26A6 and NHERF1. Interacts with SHANK2. Interacts with MYO6. Interacts (via C-terminus) with GOPC (via PDZ domain); this promotes CFTR internalization and thereby decreases channel activity. Interacts with SLC4A7 through NHERF1. Found in a complex with MYO5B and RAB11A. Interacts with ANO1. Interacts with SLC26A8. Interacts with AHCYL1; the interaction increases CFTR activity. Interacts with CSE1L. The core-glycosylated form interacts with GORASP2 (via PDZ GRASP-type 1 domain) in respone to ER stress. Interacts with MARCHF2; the interaction leads to CFTR ubiqtuitination and degradation. Interacts with ADGRG2. In terms of processing, N-glycosylated. Phosphorylated; cAMP treatment promotes phosphorylation and activates the channel. Dephosphorylation decreases the ATPase activity (in vitro). Phosphorylation at PKA sites activates the channel. Phosphorylation at PKC sites enhances the response to phosphorylation by PKA. Phosphorylated by AMPK; this inhibits channel activity. Post-translationally, ubiquitinated, leading to its degradation in the lysosome. Deubiquitination by USP10 in early endosomes enhances its endocytic recycling to the cell membrane. Ubiquitinated by RNF185 during ER stress. Ubiquitinated by MARCHF2.

It is found in the apical cell membrane. Its subcellular location is the early endosome membrane. It localises to the cell membrane. The protein resides in the recycling endosome membrane. The protein localises to the endoplasmic reticulum membrane. It is found in the nucleus. The catalysed reaction is ATP + H2O + closed Cl(-) channel = ADP + phosphate + open Cl(-) channel.. It carries out the reaction chloride(in) = chloride(out). The enzyme catalyses hydrogencarbonate(in) = hydrogencarbonate(out). It catalyses the reaction ATP + H2O = ADP + phosphate + H(+). In terms of biological role, epithelial ion channel that plays an important role in the regulation of epithelial ion and water transport and fluid homeostasis. Mediates the transport of chloride ions across the cell membrane. Possesses an intrinsic ATPase activity and utilizes ATP to gate its channel; the passive flow of anions through the channel is gated by cycles of ATP binding and hydrolysis by the ATP-binding domains. The ion channel is also permeable to HCO(3)(-); selectivity depends on the extracellular chloride concentration. Exerts its function also by modulating the activity of other ion channels and transporters. Contributes to the regulation of the pH and the ion content of the epithelial fluid layer. Modulates the activity of the epithelial sodium channel (ENaC) complex, in part by regulating the cell surface expression of the ENaC complex. May regulate bicarbonate secretion and salvage in epithelial cells by regulating the transporter SLC4A7. Can inhibit the chloride channel activity of ANO1. Plays a role in the chloride and bicarbonate homeostasis during sperm epididymal maturation and capacitation. This chain is Cystic fibrosis transmembrane conductance regulator, found in Callithrix jacchus (White-tufted-ear marmoset).